The chain runs to 618 residues: MELEDILNAREGDKLFLLGNEATVRAAIESGVGVASTYPGTPSSEIGNVLSGIAKRAGMYFEFSVNEKVALEVAAAAAASGVRSFTFMKHVGLNVASDSFMSTAYTGVRAGMVVLTADDPSMFSSQNEQDNRHYARLACLPLLEPSDPQEVLEFMNHAFELSEDYGLPVLLRTTTRVSHMRGVVEVGSRMREPSEGFFRKDPERFVPVPATARVMHRKLVDKMKELRIRADESELNRVFNGGSDSELGVVASGGAFNYVYDALESLGLELPVLKLGFTYPFPAGLVEEFLSGLKRVLVVEEVDPIMEREVLAVAGSARLDLDVHGKLDGTLPEIYEYNEDILRKAISGLTGAPSVERECDVPDIPERPPSLCPGCPHRAVYYAVRRAADELELSGDEIIFPTDIGCYTLGIEPPYSAADYLLSMGSSIGTSCGFSAATTQRIVSFIGDSTFFHAGIPPLINAVHNKQRFVLVVLDNRTTAMTGGQPHPGLPVDGMGDEAPEISIEEIVRASGVEFVETVNPMNIKRTSETVKRALEHESVAVVISKYPCMLSSGAVRGRPMAVDGEKCDLCLECIRDLACPAMVTREGEVFIDPLKCRGCSVCLQICPAGAIKPEGKG.

2 consecutive 4Fe-4S ferredoxin-type domains span residues 558–587 (GRPM…VTRE) and 588–617 (GEVF…PEGK). Residues cysteine 568, cysteine 571, cysteine 574, cysteine 580, cysteine 597, cysteine 600, cysteine 603, and cysteine 607 each contribute to the [4Fe-4S] cluster site.

Heterodimer of the IorA and IorB subunits. [4Fe-4S] cluster serves as cofactor.

It carries out the reaction indole-3-pyruvate + 2 oxidized [2Fe-2S]-[ferredoxin] + CoA = (indol-3-yl)acetyl-CoA + 2 reduced [2Fe-2S]-[ferredoxin] + CO2 + H(+). Catalyzes the ferredoxin-dependent oxidative decarboxylation of arylpyruvates. This chain is Indolepyruvate oxidoreductase subunit IorA (iorA), found in Methanothermobacter thermautotrophicus (strain ATCC 29096 / DSM 1053 / JCM 10044 / NBRC 100330 / Delta H) (Methanobacterium thermoautotrophicum).